The primary structure comprises 190 residues: Elongation factor P-like protein (190 aa).

This sequence belongs to the elongation factor P family.

The protein is Elongation factor P-like protein of Marinomonas sp. (strain MWYL1).